The primary structure comprises 264 residues: Thymidylate synthase (264 aa).

Arginine 21 is a binding site for dUMP. Residue histidine 51 coordinates (6R)-5,10-methylene-5,6,7,8-tetrahydrofolate. 126-127 is a binding site for dUMP; that stretch reads RR. Cysteine 146 serves as the catalytic Nucleophile. DUMP-binding positions include 166 to 169, asparagine 177, and 207 to 209; these read RSAD and HLY. Aspartate 169 provides a ligand contact to (6R)-5,10-methylene-5,6,7,8-tetrahydrofolate. Serine 263 provides a ligand contact to (6R)-5,10-methylene-5,6,7,8-tetrahydrofolate.

This sequence belongs to the thymidylate synthase family. Bacterial-type ThyA subfamily. Homodimer.

The protein resides in the cytoplasm. The catalysed reaction is dUMP + (6R)-5,10-methylene-5,6,7,8-tetrahydrofolate = 7,8-dihydrofolate + dTMP. It participates in pyrimidine metabolism; dTTP biosynthesis. Functionally, catalyzes the reductive methylation of 2'-deoxyuridine-5'-monophosphate (dUMP) to 2'-deoxythymidine-5'-monophosphate (dTMP) while utilizing 5,10-methylenetetrahydrofolate (mTHF) as the methyl donor and reductant in the reaction, yielding dihydrofolate (DHF) as a by-product. This enzymatic reaction provides an intracellular de novo source of dTMP, an essential precursor for DNA biosynthesis. This is Thymidylate synthase from Nitrosococcus oceani (strain ATCC 19707 / BCRC 17464 / JCM 30415 / NCIMB 11848 / C-107).